The primary structure comprises 452 residues: Protein mab-21-like 4 (452 aa).

The polypeptide is Protein mab-21-like 4 (Mab21l4) (Mus musculus (Mouse)).